The sequence spans 143 residues: Potassium voltage-gated channel subfamily E regulatory beta subunit 5 (143 aa).

Residues Asn-2 and Asn-25 are each glycosylated (N-linked (GlcNAc...) asparagine). The chain crosses the membrane as a helical span at residues 61 to 81 (LYILLIMIFYACLAGGLILAY). Residues 82–143 (TRSRKLVEAK…PALAQGAERV (62 aa)) are Cytoplasmic-facing.

This sequence belongs to the potassium channel KCNE family. Interacts with KCNQ1; impairs KCNQ1 localization in lipid rafts and only conducts current upon strong and continued depolarization. Detected in embryonal dorsal root and nerve ganglia, in the somites and in myoepicardial layer of the developing heart wall. Detected at lower levels in the central nervous system (CNS) and in developing limb.

The protein resides in the membrane. Functionally, potassium channel ancillary subunit that is essential for generation of some native K(+) currents by virtue of formation of heteromeric ion channel complex with voltage-gated potassium (Kv) channel pore-forming alpha subunits. Functions as an inhibitory beta-subunit of the repolarizing cardiac potassium ion channel KCNQ1. This Mus musculus (Mouse) protein is Potassium voltage-gated channel subfamily E regulatory beta subunit 5 (Kcne5).